The chain runs to 162 residues: Phenazine biosynthesis protein PhzB 2 (162 aa).

A Phosphothreonine modification is found at threonine 91.

The protein belongs to the PhzA/PhzB family.

Its function is as follows. Involved in the biosynthesis of the antibiotic phenazine, a nitrogen-containing heterocyclic molecule having important roles in virulence, competition and biological control. The protein is Phenazine biosynthesis protein PhzB 2 (phzB2) of Pseudomonas aeruginosa (strain UCBPP-PA14).